The chain runs to 242 residues: Ribonuclease 3 (242 aa).

The RNase III domain maps to 14–142; it reads LRRFAARFAL…VIGALYLSTG (129 aa). Position 56 (Glu56) interacts with Mg(2+). Asp60 is a catalytic residue. Mg(2+) is bound by residues Asp128 and Glu131. The active site involves Glu131. One can recognise a DRBM domain in the interval 170–235; the sequence is NHKSALQELT…ARGAYAALRS (66 aa).

The protein belongs to the ribonuclease III family. Homodimer. It depends on Mg(2+) as a cofactor.

It is found in the cytoplasm. The catalysed reaction is Endonucleolytic cleavage to 5'-phosphomonoester.. Digests double-stranded RNA. Involved in the processing of primary rRNA transcript to yield the immediate precursors to the large and small rRNAs (23S and 16S). Processes some mRNAs, and tRNAs when they are encoded in the rRNA operon. Processes pre-crRNA and tracrRNA of type II CRISPR loci if present in the organism. In Gloeobacter violaceus (strain ATCC 29082 / PCC 7421), this protein is Ribonuclease 3.